A 370-amino-acid chain; its full sequence is Nociceptin receptor (370 aa).

Over 1 to 48 the chain is Extracellular; it reads MESLFPAPFWEVLYGSPLQGNLSLLSPNHSLLPPHLLLNASHGAFLPL. 3 N-linked (GlcNAc...) asparagine glycosylation sites follow: asparagine 21, asparagine 28, and asparagine 39. Residues 49–74 traverse the membrane as a helical segment; it reads GLKVTIVGLYLAVCVGGLLGNCLVMY. The Cytoplasmic portion of the chain corresponds to 75-87; the sequence is VILRHTKMKTATN. Residues 88–109 traverse the membrane as a helical segment; the sequence is IYIFNLALADTAVLLTLPFQGT. The Extracellular portion of the chain corresponds to 110–124; the sequence is DVLLGFWPFGNALCK. A disulfide bridge connects residues cysteine 123 and cysteine 200. A helical transmembrane segment spans residues 125-146; the sequence is AVIAIDYYNMFTSAFTLTAMSV. The Cytoplasmic portion of the chain corresponds to 147–165; that stretch reads DRYVAICHPIRALDVRTSS. A helical membrane pass occupies residues 166 to 188; the sequence is KAQAVNVAIWALASIVGVPVAIM. At 189–211 the chain is on the extracellular side; sequence GSAQVEDEEIECLVEIPAPQDYW. A helical membrane pass occupies residues 212–236; it reads GPVFAVCIFLFSFVIPVLIISVCYS. Residues 237–264 lie on the Cytoplasmic side of the membrane; sequence LMVRRLRGVRLLSGSREKDRNLRRITRL. A helical transmembrane segment spans residues 265–285; that stretch reads VLVVVAVFVGCWTPVQVFVLV. The Extracellular portion of the chain corresponds to 286 to 300; sequence QGLGVQPGSETAVAV. The chain crosses the membrane as a helical span at residues 301 to 322; sequence LRFCTALGYVNSCLNPILYAFL. Residues 323 to 370 lie on the Cytoplasmic side of the membrane; that stretch reads DENFKACFRKFCCAPTRRREMQVSDRVRSIAKDVALACKTSETVPRPA. Cysteine 334 is lipidated: S-palmitoyl cysteine.

This sequence belongs to the G-protein coupled receptor 1 family. In terms of processing, phosphorylation at Ser-363 requires GRK3. As to expression, detected in brain cortex, stomach, ileum, jejunum and colon.

The protein localises to the cell membrane. The protein resides in the cytoplasmic vesicle. Functionally, G-protein coupled opioid receptor that functions as a receptor for the endogenous neuropeptide nociceptin. Ligand binding causes a conformation change that triggers signaling via guanine nucleotide-binding proteins (G proteins) and modulates the activity of down-stream effectors. Signaling via G proteins mediates inhibition of adenylate cyclase activity and calcium channel activity. Arrestins modulate signaling via G proteins and mediate the activation of alternative signaling pathways that lead to the activation of MAP kinases. Plays a role in modulating nociception and the perception of pain. Plays a role in the regulation of locomotor activity by the neuropeptide nociceptin. The polypeptide is Nociceptin receptor (OPRL1) (Sus scrofa (Pig)).